A 347-amino-acid chain; its full sequence is NADH-ubiquinone oxidoreductase chain 2 (347 aa).

Transmembrane regions (helical) follow at residues 1-21 (MNPL…GIVM), 25-45 (HWLT…PILM), 59-79 (YFLT…INLV), 96-116 (IILT…FWVP), 122-142 (VHLP…MSVL), 148-168 (MINL…GGWG), 200-220 (MALL…LTFM), 240-260 (ITTI…LSGF), 274-294 (NSII…FFYM), and 325-345 (LLSP…MLML).

It belongs to the complex I subunit 2 family. As to quaternary structure, core subunit of respiratory chain NADH dehydrogenase (Complex I) which is composed of 45 different subunits. Interacts with TMEM242.

It localises to the mitochondrion inner membrane. The enzyme catalyses a ubiquinone + NADH + 5 H(+)(in) = a ubiquinol + NAD(+) + 4 H(+)(out). Its function is as follows. Core subunit of the mitochondrial membrane respiratory chain NADH dehydrogenase (Complex I) which catalyzes electron transfer from NADH through the respiratory chain, using ubiquinone as an electron acceptor. Essential for the catalytic activity and assembly of complex I. This is NADH-ubiquinone oxidoreductase chain 2 from Thoopterus nigrescens (Swift fruit bat).